The primary structure comprises 146 residues: Actin-depolymerizing factor 6 (146 aa).

At Ser-13 the chain carries Phosphoserine. Residues 14-146 (GMGVADESKT…DLEVLRERAN (133 aa)) enclose the ADF-H domain.

This sequence belongs to the actin-binding proteins ADF family. Phosphorylated. Expressed in vascular tissues of all organs.

Its subcellular location is the cytoplasm. It localises to the cytoskeleton. Actin-depolymerizing protein. Severs actin filaments (F-actin) and binds to actin monomers. This is Actin-depolymerizing factor 6 (ADF6) from Arabidopsis thaliana (Mouse-ear cress).